We begin with the raw amino-acid sequence, 428 residues long: Gamma-glutamyl phosphate reductase (428 aa).

It belongs to the gamma-glutamyl phosphate reductase family.

The protein localises to the cytoplasm. The catalysed reaction is L-glutamate 5-semialdehyde + phosphate + NADP(+) = L-glutamyl 5-phosphate + NADPH + H(+). The protein operates within amino-acid biosynthesis; L-proline biosynthesis; L-glutamate 5-semialdehyde from L-glutamate: step 2/2. Functionally, catalyzes the NADPH-dependent reduction of L-glutamate 5-phosphate into L-glutamate 5-semialdehyde and phosphate. The product spontaneously undergoes cyclization to form 1-pyrroline-5-carboxylate. The chain is Gamma-glutamyl phosphate reductase from Afipia carboxidovorans (strain ATCC 49405 / DSM 1227 / KCTC 32145 / OM5) (Oligotropha carboxidovorans).